A 588-amino-acid polypeptide reads, in one-letter code: NADP-dependent malic enzyme 2 (588 aa).

The disordered stretch occupies residues 1 to 21; it reads MGSTPTDLPGEDVADNRSGVG. Gly-2 is subject to N-acetylglycine. Tyr-136 (proton donor) is an active-site residue. Arg-189 provides a ligand contact to NADP(+). Catalysis depends on Lys-207, which acts as the Proton acceptor. Residues Glu-279, Asp-280, and Asp-303 each contribute to the a divalent metal cation site. NADP(+)-binding positions include Asp-303, 332–348, and Asn-444; that span reads LFLGAGEAGTGIAELIA.

The protein belongs to the malic enzymes family. In terms of assembly, homohexamers and homooctamers. It depends on Mg(2+) as a cofactor. The cofactor is Mn(2+). In terms of tissue distribution, expressed in leaves, stems, flowers and roots. Particularly present in vasculatures, trichome basal cells and hydatodes.

It localises to the cytoplasm. The catalysed reaction is (S)-malate + NADP(+) = pyruvate + CO2 + NADPH. It catalyses the reaction oxaloacetate + H(+) = pyruvate + CO2. With respect to regulation, activated by coenzyme A (CoA), aspartate, succinate and fumarate. Repressed by oxaloacetate, glucose and ATP. In Arabidopsis thaliana (Mouse-ear cress), this protein is NADP-dependent malic enzyme 2 (NADP-ME2).